The following is a 559-amino-acid chain: Frizzled-5 (559 aa).

An N-terminal signal peptide occupies residues 1 to 26 (MGSFRSGVFALSFVVLLLDYFAPAQA). Topologically, residues 27–220 (ASKAIVCQEI…QPYFTQDEKM (194 aa)) are extracellular. An FZ domain is found at 28 to 149 (SKAIVCQEIT…GDPDTLCMYY (122 aa)). 5 disulfides stabilise this stretch: Cys-33-Cys-94, Cys-41-Cys-87, Cys-78-Cys-116, Cys-105-Cys-146, and Cys-109-Cys-133. Residue Asn-47 is glycosylated (N-linked (GlcNAc...) asparagine). N-linked (GlcNAc...) asparagine glycosylation is present at Asn-150. A helical membrane pass occupies residues 221–241 (FVTFWIGLWSILCFISTFTTV). Topologically, residues 242–257 (ATFLIDMERFRYPERP) are cytoplasmic. A helical transmembrane segment spans residues 258–278 (IIFLSACYLFVSIGYVVRLIV). At 279–301 (GHENVACNKDHIHYETTGPALCT) the chain is on the extracellular side. A helical membrane pass occupies residues 302–322 (IVFLLIYFFGMASSIWWVILT). Over 323 to 343 (FTWFLAAGMKWGNEAIASYSQ) the chain is Cytoplasmic. The helical transmembrane segment at 344-364 (YFHMAAWLIPSVKSIAVLALS) threads the bilayer. Residues 365-387 (SVDGDPVAGICYVGNQNLDNLRG) lie on the Extracellular side of the membrane. Residues 388–408 (FVLAPLVVYLFSGTMFLLAGF) form a helical membrane-spanning segment. Residues 409 to 434 (VSLFRIRSVIKQGGTKTDKLEKLMIR) are Cytoplasmic-facing. Residues 435–455 (IGIFSVLYTVPATIVVACYIY) traverse the membrane as a helical segment. Topologically, residues 456-483 (EQHYREHWEKTHNCSCPGDKQRYRPDYA) are extracellular. Asn-468 carries N-linked (GlcNAc...) asparagine glycosylation. Residues 484 to 504 (VFMLKYLMCLVVGITSGVWIW) traverse the membrane as a helical segment. At 505-559 (SGKTLESWKRFTGRCCRNSKPINASAYSEASRALTPRTGLSNLTLPHKQVPLSHV) the chain is on the cytoplasmic side. The short motif at 507–512 (KTLESW) is the Lys-Thr-X-X-X-Trp motif, mediates interaction with the PDZ domain of Dvl family members element. A PDZ-binding motif is present at residues 557–559 (SHV).

It belongs to the G-protein coupled receptor Fz/Smo family. As to expression, expressed in retina.

The protein resides in the cell membrane. It is found in the golgi apparatus membrane. Its function is as follows. Receptor for Wnt proteins that functions in the canonical Wnt/beta-catenin signaling pathway. The canonical Wnt/beta-catenin signaling pathway leads to the activation of disheveled proteins, inhibition of GSK-3 kinase, nuclear accumulation of beta-catenin and activation of Wnt target genes. A second signaling pathway involving PKC and calcium fluxes has been seen for some family members, but it is not yet clear if it represents a distinct pathway or if it can be integrated in the canonical pathway, as PKC seems to be required for Wnt-mediated inactivation of GSK-3 kinase. Both pathways seem to involve interactions with G-proteins. May be involved in transduction and intercellular transmission of polarity information during tissue morphogenesis and/or in differentiated tissues. The chain is Frizzled-5 (fzd5) from Xenopus laevis (African clawed frog).